Here is a 424-residue protein sequence, read N- to C-terminus: Glutamate-1-semialdehyde 2,1-aminomutase (424 aa).

Lys264 is subject to N6-(pyridoxal phosphate)lysine.

Belongs to the class-III pyridoxal-phosphate-dependent aminotransferase family. HemL subfamily. Homodimer. Requires pyridoxal 5'-phosphate as cofactor.

The protein resides in the cytoplasm. The enzyme catalyses (S)-4-amino-5-oxopentanoate = 5-aminolevulinate. The protein operates within porphyrin-containing compound metabolism; protoporphyrin-IX biosynthesis; 5-aminolevulinate from L-glutamyl-tRNA(Glu): step 2/2. In Aquifex aeolicus (strain VF5), this protein is Glutamate-1-semialdehyde 2,1-aminomutase (hemL).